Reading from the N-terminus, the 428-residue chain is Glutamyl-tRNA reductase (428 aa).

Substrate contacts are provided by residues 49-52 (TCNR), serine 109, 114-116 (EGQ), and glutamine 120. The Nucleophile role is filled by cysteine 50. 189-194 (GAGKMA) serves as a coordination point for NADP(+).

It belongs to the glutamyl-tRNA reductase family. In terms of assembly, homodimer.

The enzyme catalyses (S)-4-amino-5-oxopentanoate + tRNA(Glu) + NADP(+) = L-glutamyl-tRNA(Glu) + NADPH + H(+). It functions in the pathway porphyrin-containing compound metabolism; protoporphyrin-IX biosynthesis; 5-aminolevulinate from L-glutamyl-tRNA(Glu): step 1/2. It participates in porphyrin-containing compound metabolism; chlorophyll biosynthesis. Its function is as follows. Catalyzes the NADPH-dependent reduction of glutamyl-tRNA(Glu) to glutamate 1-semialdehyde (GSA). This is Glutamyl-tRNA reductase from Rippkaea orientalis (strain PCC 8801 / RF-1) (Cyanothece sp. (strain PCC 8801)).